Reading from the N-terminus, the 468-residue chain is Siroheme synthase 3 (468 aa).

The segment at 1–204 (MDYLPIFCRL…GDSASANQLA (204 aa)) is precorrin-2 dehydrogenase /sirohydrochlorin ferrochelatase. NAD(+)-binding positions include 22–23 (EV) and 43–44 (PE). Residue Ser128 is modified to Phosphoserine. The tract at residues 216–468 (GEVVLVGAGP…GAADAALASA (253 aa)) is uroporphyrinogen-III C-methyltransferase. Residue Pro225 participates in S-adenosyl-L-methionine binding. Catalysis depends on Asp248, which acts as the Proton acceptor. Lys270 acts as the Proton donor in catalysis. S-adenosyl-L-methionine contacts are provided by residues 301 to 303 (GGD), Ile306, 331 to 332 (TA), Met383, and Gly412.

The protein in the N-terminal section; belongs to the precorrin-2 dehydrogenase / sirohydrochlorin ferrochelatase family. In the C-terminal section; belongs to the precorrin methyltransferase family.

It carries out the reaction uroporphyrinogen III + 2 S-adenosyl-L-methionine = precorrin-2 + 2 S-adenosyl-L-homocysteine + H(+). It catalyses the reaction precorrin-2 + NAD(+) = sirohydrochlorin + NADH + 2 H(+). The catalysed reaction is siroheme + 2 H(+) = sirohydrochlorin + Fe(2+). The protein operates within cofactor biosynthesis; adenosylcobalamin biosynthesis; precorrin-2 from uroporphyrinogen III: step 1/1. Its pathway is cofactor biosynthesis; adenosylcobalamin biosynthesis; sirohydrochlorin from precorrin-2: step 1/1. It functions in the pathway porphyrin-containing compound metabolism; siroheme biosynthesis; precorrin-2 from uroporphyrinogen III: step 1/1. It participates in porphyrin-containing compound metabolism; siroheme biosynthesis; siroheme from sirohydrochlorin: step 1/1. The protein operates within porphyrin-containing compound metabolism; siroheme biosynthesis; sirohydrochlorin from precorrin-2: step 1/1. In terms of biological role, multifunctional enzyme that catalyzes the SAM-dependent methylations of uroporphyrinogen III at position C-2 and C-7 to form precorrin-2 via precorrin-1. Then it catalyzes the NAD-dependent ring dehydrogenation of precorrin-2 to yield sirohydrochlorin. Finally, it catalyzes the ferrochelation of sirohydrochlorin to yield siroheme. This Aeromonas hydrophila subsp. hydrophila (strain ATCC 7966 / DSM 30187 / BCRC 13018 / CCUG 14551 / JCM 1027 / KCTC 2358 / NCIMB 9240 / NCTC 8049) protein is Siroheme synthase 3.